A 641-amino-acid polypeptide reads, in one-letter code: EKIKICLQKQVNSSFSLHNGFGGNLYATEEKRMFELVKPKAGASVLNQSTWIGFGDSRTDKSNPNFPRSADVSVKTANKFRSLTGGSLMLSMFGPPGKVDYLYQGCGKHKVFYEGVNWSPHAAIDCYRKNWTDIKLNFQKNIYELASQSHCMSLVNALDKTIPLQATAGVAGNCNNSFLKNPALYTQKVTPPXXKCGKENLAFFTLPTQFGTYECRLHLVASCYFIYDSKEVYNKRGCDNYFQVIYDSSGKVVGGLDNRVSPYTGNSGDTPTMQCDMIQLKPGRYSVRSSPRFLLMPERSYCFDMKEKGPVTAVQSIWGKDRKSDYAVDQACLSTPGCMLIQKQKPYTGEADDHHGDQEMRELLSGLDYEARCISQSGWVNETSPFTEEYLLPPKFGRCPLAAKEESIPKIPDGLLIPTSGTDTTVTKPKSRIFGIDDLIIGLLFVAIVEAGIGGYLLGSRKESGGGVTKESAEKGFEKIGNDIQILRSSTNIAIEKLNDRISHDEQAIRDLTLEIENARSEALLGELGIIRALLVGNISIGLQESLWELASEITNRAGDLAVEISPGCWIIDNNICDQSCQNFIFKFNETAPVPTIPPLDTKIDLQSDPFYWGSSLGLAITAAISLAALVISGIAICRTK.

Positions 1-26 are fusion domain-1; the sequence is EKIKICLQKQVNSSFSLHNGFGGNLY. Over 1-616 the chain is Extracellular; it reads EKIKICLQKQ…QSDPFYWGSS (616 aa). Intrachain disulfides connect Cys-6/Cys-569, Cys-106/Cys-151, Cys-126/Cys-174, Cys-196/Cys-238, Cys-215/Cys-302, Cys-223/Cys-275, and Cys-332/Cys-338. N-linked (GlcNAc...) asparagine; by host glycosylation is found at Asn-12 and Asn-47. The segment at 27–137 is esterase domain-1; sequence ATEEKRMFEL…RKNWTDIKLN (111 aa). Residue Ser-57 is the Nucleophile of the active site. A glycan (N-linked (GlcNAc...) asparagine; by host) is linked at Asn-130. Residues 137-296 form an N-acetyl-9-O-acetylneuraminic acid binding region; that stretch reads NFQKNIYELA…VRSSPRFLLM (160 aa). Residues 297–351 form an esterase domain-2 region; that stretch reads PERSYCFDMKEKGPVTAVQSIWGKDRKSDYAVDQACLSTPGCMLIQKQKPYTGEA. Active-site charge relay system residues include Asp-352 and His-355. The interval 352–637 is fusion domain-2; that stretch reads DDHHGDQEMR…AALVISGIAI (286 aa). A glycan (N-linked (GlcNAc...) asparagine; by host) is linked at Asn-381. Residues 617-637 form a helical membrane-spanning segment; the sequence is LGLAITAAISLAALVISGIAI. Topologically, residues 638–641 are cytoplasmic; that stretch reads CRTK.

It belongs to the influenza type C/coronaviruses hemagglutinin-esterase family. As to quaternary structure, homotrimer of disulfide-linked HEF1-HEF2. In terms of processing, in natural infection, inactive HEF is matured into HEF1 and HEF2 outside the cell by one or more trypsin-like, arginine-specific endoprotease.

Its subcellular location is the virion membrane. The protein resides in the host cell membrane. The catalysed reaction is N-acetyl-9-O-acetylneuraminate + H2O = N-acetylneuraminate + acetate + H(+). The enzyme catalyses N-acetyl-4-O-acetylneuraminate + H2O = N-acetylneuraminate + acetate + H(+). Functionally, binds to the N-acetyl-9-O-acetylneuraminic acid residues on the cell surface, bringing about the attachment of the virus particle to the cell. Plays a major role in the determination of host range restriction and virulence. Class I viral fusion protein. Responsible for penetration of the virus into the cell cytoplasm by mediating the fusion of the membrane of the endocytosed virus particle with the endosomal membrane. Low pH in endosomes induce an irreversible conformational change in HEF2, releasing the fusion hydrophobic peptide. Several trimers are required to form a competent fusion pore. Displays a receptor-destroying activity which is a neuraminidate-O-acetyl esterase. This activity cleaves off any receptor on the cell surface, which would otherwise prevent virions release. These cleavages prevent self-aggregation and ensure the efficient spread of the progeny virus from cell to cell. The sequence is that of Hemagglutinin-esterase-fusion glycoprotein (HE) from Influenza C virus (strain C/Kyoto/41/1982).